Here is a 153-residue protein sequence, read N- to C-terminus: Endoribonuclease YbeY (153 aa).

Residues histidine 118, histidine 122, and histidine 128 each coordinate Zn(2+).

It belongs to the endoribonuclease YbeY family. Zn(2+) serves as cofactor.

Its subcellular location is the cytoplasm. Its function is as follows. Single strand-specific metallo-endoribonuclease involved in late-stage 70S ribosome quality control and in maturation of the 3' terminus of the 16S rRNA. This chain is Endoribonuclease YbeY, found in Oenococcus oeni (strain ATCC BAA-331 / PSU-1).